Consider the following 577-residue polypeptide: Sensory neuron membrane protein 2 (577 aa).

Residues 1-6 (MVQCTL) lie on the Cytoplasmic side of the membrane. Residues 7-27 (IWAGIGAMMAVSGALLGWVVF) traverse the membrane as a helical segment. Over 28–519 (PRAVHEKVIE…LMKVLSLLDV (492 aa)) the chain is Extracellular. N-linked (GlcNAc...) asparagine glycosylation is found at asparagine 66, asparagine 161, asparagine 271, and asparagine 307. 3 disulfides stabilise this stretch: cysteine 316–cysteine 384, cysteine 345–cysteine 411, and cysteine 386–cysteine 400. Residues 520–540 (VQWVLIGVGLLLAVLMPTVYF) traverse the membrane as a helical segment. The Cytoplasmic portion of the chain corresponds to 541-577 (VKRCRGEGSRTVSPAVTATTSAASLSTVAGVTGDRSK).

It belongs to the CD36 family.

The protein localises to the cell membrane. Functionally, plays an olfactory role that is not restricted to pheromone sensitivity. This chain is Sensory neuron membrane protein 2, found in Anopheles gambiae (African malaria mosquito).